The chain runs to 237 residues: Histone H1E (237 aa).

Residues methionine 1–proline 21 are compositionally biased toward low complexity. Disordered stretches follow at residues methionine 1–glutamate 56 and leucine 109–lysine 237. The segment covering glutamate 26 to proline 42 has biased composition (basic and acidic residues). Residues threonine 50–proline 124 form the H15 domain. Over residues alanine 182 to lysine 195 the composition is skewed to low complexity. Residues proline 200–glutamate 209 are compositionally biased toward basic and acidic residues. A compositionally biased stretch (basic residues) spans alanine 210 to lysine 237.

Belongs to the histone H1/H5 family.

The protein resides in the nucleus. It localises to the chromosome. Its function is as follows. Histones H1 are necessary for the condensation of nucleosome chains into higher-order structures. The protein is Histone H1E of Chironomus tentans (Midge).